We begin with the raw amino-acid sequence, 334 residues long: Meso-diaminopimelate D-dehydrogenase (334 aa).

Residues 16–19 (YGNL), 40–42 (TRR), 75–78 (CSGS), 98–100 (GFD), and 127–131 (CGWDP) each bind NADP(+). Substrate is bound by residues Asp-100, Asp-130, Trp-154, 160 to 161 (QG), Thr-179, Arg-205, His-255, and Asn-284.

It belongs to the diaminopimelate dehydrogenase family. In terms of assembly, homodimer.

The catalysed reaction is meso-2,6-diaminopimelate + NADP(+) + H2O = (S)-2-amino-6-oxoheptanedioate + NH4(+) + NADPH + H(+). The protein operates within amino-acid biosynthesis; L-lysine biosynthesis via DAP pathway; DL-2,6-diaminopimelate from (S)-tetrahydrodipicolinate: step 1/1. Its function is as follows. Catalyzes the reversible NADPH-dependent reductive amination of L-2-amino-6-oxopimelate, the acyclic form of L-tetrahydrodipicolinate, to generate the meso compound, D,L-2,6-diaminopimelate. Probably plays a role in lysine biosynthesis. Exhibits a high substrate specificity for meso-2,6-diaminopimelate (m-DAP), since the activity with L,L-2,6-diaminopimelate is less than 5% of the activity observed with m-DAP. Can use NAD(+) only very poorly since the activity observed in the presence of NAD(+) is about 0.3% of that with NADP(+). This chain is Meso-diaminopimelate D-dehydrogenase (ddh), found in Acetivibrio thermocellus (strain ATCC 27405 / DSM 1237 / JCM 9322 / NBRC 103400 / NCIMB 10682 / NRRL B-4536 / VPI 7372) (Clostridium thermocellum).